Reading from the N-terminus, the 158-residue chain is Large ribosomal subunit protein uL30 (158 aa).

It belongs to the universal ribosomal protein uL30 family. Part of the 50S ribosomal subunit.

The chain is Large ribosomal subunit protein uL30 from Saccharolobus islandicus (strain Y.G.57.14 / Yellowstone #1) (Sulfolobus islandicus).